The primary structure comprises 137 residues: MGRVRTKTVKRASKVLIERFYPKLTLDFETNKRLTSEIAVIQSKRLRNKIAGYTTHLMKRIQKGPVRGISFKLQEEERERKDQYVPEVSALDLSHTNGQLEIDADTADLVKSLGFKIPVQTVSISAQRGPRRFAKRN.

Belongs to the eukaryotic ribosomal protein eS17 family. Component of the small ribosomal subunit. Mature ribosomes consist of a small (40S) and a large (60S) subunit. The 40S subunit contains about 32 different proteins and 1 molecule of RNA (18S). The 60S subunit contains 45 different proteins and 3 molecules of RNA (25S, 5.8S and 5S).

Its subcellular location is the cytoplasm. Its function is as follows. Component of the ribosome, a large ribonucleoprotein complex responsible for the synthesis of proteins in the cell. The small ribosomal subunit (SSU) binds messenger RNAs (mRNAs) and translates the encoded message by selecting cognate aminoacyl-transfer RNA (tRNA) molecules. The large subunit (LSU) contains the ribosomal catalytic site termed the peptidyl transferase center (PTC), which catalyzes the formation of peptide bonds, thereby polymerizing the amino acids delivered by tRNAs into a polypeptide chain. The nascent polypeptides leave the ribosome through a tunnel in the LSU and interact with protein factors that function in enzymatic processing, targeting, and the membrane insertion of nascent chains at the exit of the ribosomal tunnel. The polypeptide is Small ribosomal subunit protein eS17 (RPS17B) (Candida albicans (strain SC5314 / ATCC MYA-2876) (Yeast)).